The following is a 168-amino-acid chain: Chemoreceptor glutamine deamidase CheD (168 aa).

The protein belongs to the CheD family. As to quaternary structure, forms a complex with CheC.

The catalysed reaction is L-glutaminyl-[protein] + H2O = L-glutamyl-[protein] + NH4(+). In terms of biological role, deamidates glutamine residues to glutamate on methyl-accepting chemotaxis receptors (MCPs). CheD-mediated MCP deamidation is required for productive communication of the conformational signals of the chemoreceptors to the CheA kinase. The polypeptide is Chemoreceptor glutamine deamidase CheD (Bacillus licheniformis (strain ATCC 14580 / DSM 13 / JCM 2505 / CCUG 7422 / NBRC 12200 / NCIMB 9375 / NCTC 10341 / NRRL NRS-1264 / Gibson 46)).